A 130-amino-acid polypeptide reads, in one-letter code: Vascular-related unknown protein 3 (130 aa).

The tract at residues 45–81 is disordered; that stretch reads DDSSMMSDAASPMGCVEEDTASSPSNRTEGYSGMEDN.

Involved in the regulation of plant growth. The chain is Vascular-related unknown protein 3 from Arabidopsis thaliana (Mouse-ear cress).